Reading from the N-terminus, the 214-residue chain is Redox-sensing transcriptional repressor Rex (214 aa).

A DNA-binding region (H-T-H motif) is located at residues 17–56 (LYYRIFKRFHADQVEKASSKQIADAMGIDSATVRRDFSYF). Residue 91 to 96 (GCGNIG) participates in NAD(+) binding.

This sequence belongs to the transcriptional regulatory Rex family. As to quaternary structure, homodimer.

It is found in the cytoplasm. In terms of biological role, modulates transcription in response to changes in cellular NADH/NAD(+) redox state. The chain is Redox-sensing transcriptional repressor Rex from Streptococcus pyogenes serotype M4 (strain MGAS10750).